Consider the following 1026-residue polypeptide: Leucine-rich repeat and coiled-coil domain-containing protein 1 (1026 aa).

5 LRR repeats span residues 39 to 60, 61 to 82, 83 to 104, 105 to 126, and 131 to 152; these read SIHA…DHIW, NLRH…NTLT, KLCT…EALV, NLTK…MPLH, and KLRY…LQCT. An LRRCT domain is found at 170–212; it reads NPICLIPGYRAIILQTLPQLRILDCKNIFGEPVSLEEINSSHL. Positions 310-338 are disordered; it reads DNVPEKDLRPKRDTDITSESDYGNRRECS. Basic and acidic residues predominate over residues 312 to 324; it reads VPEKDLRPKRDTD. The stretch at 428–641 forms a coiled coil; the sequence is REMRWKAEQT…DLENEFRIAL (214 aa).

It belongs to the LRRCC1 family.

It is found in the cytoplasm. The protein localises to the cytoskeleton. It localises to the microtubule organizing center. The protein resides in the centrosome. Its subcellular location is the centriole. Functionally, required for the organization of the mitotic spindle. Maintains the structural integrity of centrosomes during mitosis. The chain is Leucine-rich repeat and coiled-coil domain-containing protein 1 (Lrrcc1) from Mus musculus (Mouse).